A 455-amino-acid chain; its full sequence is Bleomycin hydrolase (455 aa).

At M1 the chain carries N-acetylmethionine. Residues C73 and H372 contribute to the active site. K391 bears the N6-acetyllysine mark. N396 is a catalytic residue.

The protein belongs to the peptidase C1 family. Homohexamer. Interacts with NUDT12 (via ANK repeats).

The protein resides in the cytoplasm. It is found in the cytoplasmic granule. The catalysed reaction is Inactivates bleomycin B2 (a cytotoxic glycometallopeptide) by hydrolysis of a carboxyamide bond of beta-aminoalanine, but also shows general aminopeptidase activity. The specificity varies somewhat with source, but amino acid arylamides of Met, Leu and Ala are preferred.. Its function is as follows. The normal physiological role of BLM hydrolase is unknown, but it catalyzes the inactivation of the antitumor drug BLM (a glycopeptide) by hydrolyzing the carboxamide bond of its B-aminoalaninamide moiety thus protecting normal and malignant cells from BLM toxicity. This chain is Bleomycin hydrolase (BLMH), found in Homo sapiens (Human).